We begin with the raw amino-acid sequence, 55 residues long: Large ribosomal subunit protein bL33 (55 aa).

The protein belongs to the bacterial ribosomal protein bL33 family.

This Bartonella quintana (strain Toulouse) (Rochalimaea quintana) protein is Large ribosomal subunit protein bL33.